The following is a 250-amino-acid chain: Ribonucleotide monophosphatase NagD (250 aa).

Asp-9 and Asp-11 together coordinate Mg(2+). The active site involves Asp-11. Substrate contacts are provided by residues Asp-11, 42–43, and Lys-176; that span reads TN. A Mg(2+)-binding site is contributed by Asp-201. Position 202 to 205 (202 to 205) interacts with substrate; the sequence is NLRT.

It belongs to the HAD-like hydrolase superfamily. NagD family. As to quaternary structure, monomer. The cofactor is Mg(2+). It depends on Mn(2+) as a cofactor. Requires Co(2+) as cofactor. Zn(2+) is required as a cofactor.

The enzyme catalyses a ribonucleoside 5'-phosphate + H2O = a ribonucleoside + phosphate. In terms of biological role, catalyzes the dephosphorylation of an unusually broad range of substrate including deoxyribo- and ribonucleoside tri-, di-, and monophosphates, as well as polyphosphate and glucose-1-P (Glu1P). The chain is Ribonucleotide monophosphatase NagD (nagD) from Escherichia coli O157:H7.